The following is a 330-amino-acid chain: MGNFHTMLDALLEDQEEAVLATIVQVEGSAYRKAGASMLFKKKGRRIGLLSGGCVEEDVFQRISALGDQLTSTLIPYDMRSEDDLSWGMGAGCNGIIHVHAERITQEKRRHYEKVRDCLHSGKAVTSVIKIESSHYLFLTENGHFGNWPDAPLQDIQRTVSTLHLPHFDQTTNMFIQRIEPKPRLILFGAGPDNVPLANLAADTGFSVIVTDWRPAYCTSSLFPKADQLITAFPEQMLSEFQFFPHDAAVVATHHYQHDQTIINFLFSQNLHYIGLLGSANRTKRLLSGKHPPSHFYSPVGLKIGAEGPEEIAVSVVAEIIQTRKRVAVV.

Could be composed of four subunits: PucA, PucC, PucD and PucE.

The enzyme catalyses xanthine + NAD(+) + H2O = urate + NADH + H(+). It catalyses the reaction hypoxanthine + NAD(+) + H2O = xanthine + NADH + H(+). The protein operates within purine metabolism; hypoxanthine degradation; urate from hypoxanthine: step 1/2. Its pathway is purine metabolism; hypoxanthine degradation; urate from hypoxanthine: step 2/2. Oxidizes hypoxanthine and xanthine to uric acid. PucA subunit could exert a molybdenum cofactor recruiting function. The polypeptide is Probable xanthine dehydrogenase subunit A (pucA) (Bacillus subtilis (strain 168)).